Reading from the N-terminus, the 2179-residue chain is Voltage-dependent L-type calcium channel subunit alpha-1D (2179 aa).

3 disordered regions span residues 1 to 21 (MMMMMMMKKMQHQRQHQEDHA), 30 to 49 (TRLPISGEGPTSQPNSSKQT), and 64 to 100 (KAAQTMSTSAPPPVGSLSQRKRQQYAKSKKQGNSSNS). Topologically, residues 1–126 (MMMMMMMKKM…RACISIVEWK (126 aa)) are cytoplasmic. The span at 38-49 (GPTSQPNSSKQT) shows a compositional bias: polar residues. Positions 82-93 (QRKRQQYAKSKK) are enriched in basic residues. One copy of the I repeat lies at 113 to 409 (NPIRRACISI…LVLGVLSGEF (297 aa)). The chain crosses the membrane as a helical span at residues 127–145 (PFDIFILLAIFANCVALAI). At 146 to 163 (YIPFPEDDSNSTNHNLEK) the chain is on the extracellular side. Residues 164 to 183 (VEYAFLIIFTVETFLKIIAY) form a helical membrane-spanning segment. Residues 184–195 (GLLLHPNAYVRN) are Cytoplasmic-facing. The chain crosses the membrane as a helical span at residues 196 to 214 (GWNLLDFVIVIVGLFSVIL). At 215 to 235 (EQLTKETEGGNHSSGKSGGFD) the chain is on the extracellular side. The helical transmembrane segment at 236–254 (VKALRAFRVLRPLRLVSGV) threads the bilayer. Topologically, residues 255–273 (PSLQVVLNSIIKAMVPLLH) are cytoplasmic. The helical transmembrane segment at 274-293 (IALLVLFVIIIYAIIGLELF) threads the bilayer. The Extracellular segment spans residues 294-381 (IGKMHKTCFF…WVNDAIGWEW (88 aa)). Residue E364 participates in Ca(2+) binding. The chain crosses the membrane as a helical span at residues 382 to 406 (PWVYFVSLIILGSFFVLNLVLGVLS). Residues 407–543 (GEFSKEREKA…RRCRAAVKSV (137 aa)) are Cytoplasmic-facing. The segment at 429–446 (QQLEEDLKGYLDWITQAE) is binding to the beta subunit. Residues 449–480 (DPENEEEGGEEGKRNTSMPTSETESVNTENVS) form a disordered region. Over residues 463–479 (NTSMPTSETESVNTENV) the composition is skewed to polar residues. The stretch at 529–775 (NRFNRRRCRA…VFLAIAVDNL (247 aa)) is one II repeat. Residues 544–563 (TFYWLVIVLVFLNTLTISSE) traverse the membrane as a helical segment. Residues 564-578 (HYNQPDWLTQIQDIA) lie on the Extracellular side of the membrane. The chain crosses the membrane as a helical span at residues 579–597 (NKVLLALFTCEMLVKMYSL). Residues 598-605 (GLQAYFVS) lie on the Cytoplasmic side of the membrane. A helical membrane pass occupies residues 606–624 (LFNRFDCFVVCGGITETIL). The Extracellular portion of the chain corresponds to 625–634 (VELELMSPLG). The helical transmembrane segment at 635–653 (VSVFRCVRLLRIFKVTRHW) threads the bilayer. The Cytoplasmic segment spans residues 654-672 (TSLSNLVASLLNSMKSIAS). The chain crosses the membrane as a helical span at residues 673-693 (LLLLLFLFIIIFSLLGMQLFG). Residues 694-747 (GKFNFDETQTKRSTFDNFPQALLTVFQILTGEDWNAVMYDGIMAYGGPSSSGMI) are Extracellular-facing. E725 is a binding site for Ca(2+). A helical transmembrane segment spans residues 748 to 772 (VCIYFIILFICGNYILLNVFLAIAV). Positions 771–810 (AVDNLADAESLNTAQKEEAEEKERKKIARKESLENKKNNK) form a coiled coil. Over 773–906 (DNLADAESLN…VGCHKLINHH (134 aa)) the chain is Cytoplasmic. Positions 786-810 (KEEAEEKERKKIARKESLENKKNNK) are enriched in basic and acidic residues. The tract at residues 786-870 (KEEAEEKERK…AGPRPRRISE (85 aa)) is disordered. The span at 811-822 (PEVNQIANSDNK) shows a compositional bias: polar residues. The segment covering 845-858 (VGEEEEEEEEDEPE) has biased composition (acidic residues). Residues 893 to 1175 (NPIRVGCHKL…IFVGFVIVTF (283 aa)) form an III repeat. The chain crosses the membrane as a helical span at residues 907-925 (IFTNLILVFIMLSSAALAA). Topologically, residues 926–941 (EDPIRSHSFRNTILGY) are extracellular. Residues 942–961 (FDYAFTAIFTVEILLKMTTF) traverse the membrane as a helical segment. Topologically, residues 962–973 (GAFLHKGAFCRN) are cytoplasmic. Residues 974–992 (YFNLLDMLVVGVSLVSFGI) form a helical membrane-spanning segment. The Extracellular portion of the chain corresponds to 993 to 998 (QSSAIS). The chain crosses the membrane as a helical span at residues 999–1018 (VVKILRVLRVLRPLRAINRA). At 1019–1037 (KGLKHVVQCVFVAIRTIGN) the chain is on the cytoplasmic side. A helical transmembrane segment spans residues 1038 to 1057 (IMIVTTLLQFMFACIGVQLF). The Extracellular portion of the chain corresponds to 1058–1147 (KGKFYRCTDE…VGPVYNYRVE (90 aa)). The segment at 1095 to 1185 (RIWQNSDFNF…QEQGEKEYKN (91 aa)) is dihydropyridine binding. E1121 serves as a coordination point for Ca(2+). The chain crosses the membrane as a helical span at residues 1148–1168 (ISIFFIIYIIIVAFFMMNIFV). Residues 1169–1225 (GFVIVTFQEQGEKEYKNCELDKNQRQCVEYALKARPLRRYIPKNPYQYKFWYVVNSS) lie on the Cytoplasmic side of the membrane. An IV repeat occupies 1212-1487 (NPYQYKFWYV…LFVAVIMDNF (276 aa)). A helical transmembrane segment spans residues 1226–1244 (PFEYMMFVLIMLNTLCLAM). Over 1245–1259 (QHYEQSKMFNDAMDI) the chain is Extracellular. A helical transmembrane segment spans residues 1260 to 1279 (LNMVFTGVFTVEMVLKVIAF). Topologically, residues 1280–1286 (KPKGYFS) are cytoplasmic. A helical membrane pass occupies residues 1287-1308 (DAWNTFDSLIVIGSIIDVALSE). Over 1309-1333 (ADPSESETIPLPTATPGNSEESNRI) the chain is Extracellular. The chain crosses the membrane as a helical span at residues 1334-1353 (SITFFRLFRVMRLVKLLSRG). Topologically, residues 1354–1372 (EGIRTLLWTFIKSFQALPY) are cytoplasmic. A helical membrane pass occupies residues 1373-1392 (VALLIAMLFFIYAVIGMQMF). Topologically, residues 1393-1459 (GKVAMRDNNQ…GEEYTCGSNF (67 aa)) are extracellular. The tract at residues 1440–1506 (LCDPDSDYNP…LGPHHLDEFK (67 aa)) is dihydropyridine binding. The interval 1452-1495 (EYTCGSNFAIVYFISFYMLCAFLIINLFVAVIMDNFDYLTRDWS) is phenylalkylamine binding. A helical membrane pass occupies residues 1460–1484 (AIVYFISFYMLCAFLIINLFVAVIM). The Cytoplasmic portion of the chain corresponds to 1485–2179 (DNFDYLTRDW…ADEMICITTL (695 aa)). Disordered regions lie at residues 1704–1789 (LLGN…AHGK), 1896–1941 (FERP…RSSF), and 2135–2171 (GDMGPISHRQDYELQDFGPGYSDEEPDPGREEEDLAD). Residues 1764–1782 (SIGKQAPTSTNANLNNANM) show a composition bias toward polar residues. Positions 2156–2171 (SDEEPDPGREEEDLAD) are enriched in acidic residues.

The protein belongs to the calcium channel alpha-1 subunit (TC 1.A.1.11) family. CACNA1D subfamily. In terms of assembly, voltage-dependent calcium channels are multisubunit complexes, consisting of alpha-1, alpha-2, beta and delta subunits in a 1:1:1:1 ratio. The channel activity is directed by the pore-forming and voltage-sensitive alpha-1 subunit. In many cases, this subunit is sufficient to generate voltage-sensitive calcium channel activity. The auxiliary subunits beta and alpha-2/delta linked by a disulfide bridge regulate the channel activity. Interacts (via IQ domain) with CABP1 and CABP4 in a calcium independent manner. Interacts with RIMBP2. As to expression, expressed in the inner hair cells (IHC) of the cochlea.

It localises to the membrane. It carries out the reaction Ca(2+)(in) = Ca(2+)(out). Functionally, voltage-sensitive calcium channels (VSCC) mediate the entry of calcium ions into excitable cells and are also involved in a variety of calcium-dependent processes, including muscle contraction, hormone or neurotransmitter release, gene expression, cell motility, cell division and cell death. The isoform alpha-1D gives rise to L-type calcium currents. Long-lasting (L-type) calcium channels belong to the 'high-voltage activated' (HVA) group. They are blocked by dihydropyridines (DHP), phenylalkylamines, and by benzothiazepines. In Mus musculus (Mouse), this protein is Voltage-dependent L-type calcium channel subunit alpha-1D (Cacna1d).